A 309-amino-acid chain; its full sequence is Isethionate sulfite-lyase activating enzyme (309 aa).

One can recognise a Radical SAM core domain in the interval 22–309; the sequence is HDGPGIRTVV…VVAAEHATDG (288 aa). The [4Fe-4S] cluster site is built by cysteine 36, cysteine 40, cysteine 43, cysteine 62, cysteine 68, cysteine 71, cysteine 75, cysteine 95, cysteine 98, cysteine 102, and cysteine 106. 42–44 contributes to the S-adenosyl-L-methionine binding site; that stretch reads WCS. 2 4Fe-4S ferredoxin-type domains span residues 53 to 85 and 86 to 117; these read IELA…RADD and DTIS…YGTT. S-adenosyl-L-methionine-binding positions include glycine 146, 195–197, and histidine 268; that span reads DIK.

The protein belongs to the organic radical-activating enzymes family. Monomer. [4Fe-4S] cluster is required as a cofactor.

It carries out the reaction glycyl-[protein] + reduced [flavodoxin] + S-adenosyl-L-methionine = glycin-2-yl radical-[protein] + semiquinone [flavodoxin] + 5'-deoxyadenosine + L-methionine + H(+). The protein operates within organosulfur degradation; alkanesulfonate degradation. Functionally, involved in an anaerobic respiration pathway that converts the sulfonate isethionate (2-hydroxyethanesulfonate) to ammonia, acetate and sulfide. Catalyzes activation of the isethionate sulfite-lyase IslA under anaerobic conditions by generation of an organic free radical on a glycine residue, via a homolytic cleavage of S-adenosyl-L-methionine (SAM). The chain is Isethionate sulfite-lyase activating enzyme from Oleidesulfovibrio alaskensis (strain ATCC BAA-1058 / DSM 17464 / G20) (Desulfovibrio alaskensis).